Reading from the N-terminus, the 139-residue chain is Large ribosomal subunit protein uL16 (139 aa).

The protein belongs to the universal ribosomal protein uL16 family. In terms of assembly, part of the 50S ribosomal subunit.

Functionally, binds 23S rRNA and is also seen to make contacts with the A and possibly P site tRNAs. The chain is Large ribosomal subunit protein uL16 from Synechocystis sp. (strain ATCC 27184 / PCC 6803 / Kazusa).